Consider the following 83-residue polypeptide: Small ribosomal subunit protein eS21 (83 aa).

It belongs to the eukaryotic ribosomal protein eS21 family. In terms of assembly, component of the 40S small ribosomal subunit. Interacts with sta.

Its subcellular location is the cytoplasm. The protein localises to the cytosol. The protein resides in the rough endoplasmic reticulum. May be an associated component of the ribosome rather than a core structural subunit. May act as a translation initiation factor. Has a role in regulation of cell proliferation in the hematopoietic organs and the imaginal disks of larva. The chain is Small ribosomal subunit protein eS21 (RpS21) from Drosophila ananassae (Fruit fly).